The following is a 795-amino-acid chain: Phenylalanine--tRNA ligase beta subunit (795 aa).

The tRNA-binding domain occupies 39–148; that stretch reads AGAFHGVVVG…ADAPIGTDIR (110 aa). In terms of domain architecture, B5 spans 401–476; sequence PTRATITLRR…RIYGYNNIPN (76 aa). Mg(2+) contacts are provided by aspartate 454, aspartate 460, glutamate 463, and glutamate 464. The 94-residue stretch at 701–794 folds into the FDX-ACB domain; that stretch reads SRFPANRRDI…LKQRFQASLR (94 aa).

This sequence belongs to the phenylalanyl-tRNA synthetase beta subunit family. Type 1 subfamily. Tetramer of two alpha and two beta subunits. Mg(2+) is required as a cofactor.

The protein localises to the cytoplasm. It carries out the reaction tRNA(Phe) + L-phenylalanine + ATP = L-phenylalanyl-tRNA(Phe) + AMP + diphosphate + H(+). In Pectobacterium atrosepticum (strain SCRI 1043 / ATCC BAA-672) (Erwinia carotovora subsp. atroseptica), this protein is Phenylalanine--tRNA ligase beta subunit.